Reading from the N-terminus, the 345-residue chain is tRNA N6-adenosine threonylcarbamoyltransferase (345 aa).

2 residues coordinate Fe cation: His111 and His115. Substrate contacts are provided by residues 134 to 138, Asp167, Gly180, and Asn276; that span reads LVSGG. Fe cation is bound at residue Asp304.

This sequence belongs to the KAE1 / TsaD family. It depends on Fe(2+) as a cofactor.

Its subcellular location is the cytoplasm. The enzyme catalyses L-threonylcarbamoyladenylate + adenosine(37) in tRNA = N(6)-L-threonylcarbamoyladenosine(37) in tRNA + AMP + H(+). In terms of biological role, required for the formation of a threonylcarbamoyl group on adenosine at position 37 (t(6)A37) in tRNAs that read codons beginning with adenine. Is involved in the transfer of the threonylcarbamoyl moiety of threonylcarbamoyl-AMP (TC-AMP) to the N6 group of A37, together with TsaE and TsaB. TsaD likely plays a direct catalytic role in this reaction. This Alcanivorax borkumensis (strain ATCC 700651 / DSM 11573 / NCIMB 13689 / SK2) protein is tRNA N6-adenosine threonylcarbamoyltransferase.